A 737-amino-acid polypeptide reads, in one-letter code: Glycogen [starch] synthase, muscle (737 aa).

Ser-8 is subject to Phosphoserine; by AMPK and PKA. Residue Ser-11 is modified to Phosphoserine. Position 39 (Lys-39) interacts with UDP. UDP-alpha-D-glucose is bound by residues His-205 and Arg-211. Alpha-D-glucose 6-phosphate-binding residues include His-291, Glu-292, Gln-294, His-297, and Lys-301. Arg-331 contributes to the UDP binding site. Arg-331 provides a ligand contact to UDP-alpha-D-glucose. A Phosphoserine modification is found at Ser-412. His-501 contributes to the alpha-D-glucose 6-phosphate binding site. UDP-alpha-D-glucose contacts are provided by Glu-510, Trp-512, and Gly-513. Thr-515 is a binding site for UDP. Residues Arg-582 and Arg-586 each coordinate alpha-D-glucose 6-phosphate. Positions 634–737 (YRYPRPASVP…PTSSLGEERN (104 aa)) are disordered. Residue Ser-641 is modified to Phosphoserine; by DYRK2, GSK3-alpha, GSK3-beta and PASK. Phosphoserine; by GSK3-alpha and GSK3-beta is present on residues Ser-645 and Ser-649. Ser-652 carries the phosphoserine modification. Ser-653 bears the Phosphoserine; by GSK3-alpha and GSK3-beta mark. At Ser-657 the chain carries Phosphoserine; by CK2. The span at 658-681 (EDEEDPRNGPLEEDSERYDEDEEA) shows a compositional bias: acidic residues. Residue Ser-672 is modified to Phosphoserine. A compositionally biased stretch (basic and acidic residues) spans 682-695 (AKDRRNIRAPEWPR). Ser-698 carries the phosphoserine modification. Residues 698–714 (SCTSSTSGSKRNSVDTA) show a composition bias toward polar residues. Position 700 is a phosphothreonine (Thr-700). Phosphoserine is present on Ser-710. Residues 715-737 (TSSSLSTPSEPLSPTSSLGEERN) show a composition bias toward low complexity. Thr-721 carries the phosphothreonine modification. Phosphoserine is present on residues Ser-727 and Ser-731.

The protein belongs to the glycosyltransferase 3 family. As to quaternary structure, part of the GYS1-GYG1 complex, a heterooctamer composed of a tetramer of GYS1 and 2 dimers of GYG1, where each GYS1 protomer binds to one GYG1 subunit (via GYG1 C-terminus); the GYS1 tetramer may dissociate from GYG1 dimers to continue glycogen polymerization on its own. Post-translationally, phosphorylation at Ser-8 by AMPK inactivates the enzyme activity. Primed phosphorylation at Ser-657 (site 5) by CSNK2A1 and CSNK2A2 is required for inhibitory phosphorylation at Ser-641 (site 3a), Ser-645 (site 3b), Ser-649 (site 3c) and Ser-653 (site 4) by GSK3A an GSK3B. Phosphorylated at Ser-641 by PASK, leading to inactivation; phosphorylation by PASK is inhibited by glycogen. Phosphorylated at Ser-641 by DYRK2, leading to inactivation. Dephosphorylation at Ser-641 and Ser-645 by PP1 activates the enzyme.

The catalysed reaction is [(1-&gt;4)-alpha-D-glucosyl](n) + UDP-alpha-D-glucose = [(1-&gt;4)-alpha-D-glucosyl](n+1) + UDP + H(+). The protein operates within glycan biosynthesis; glycogen biosynthesis. Allosteric activation by glucose-6-phosphate. Phosphorylation reduces the activity towards UDP-glucose. When in the non-phosphorylated state, glycogen synthase does not require glucose-6-phosphate as an allosteric activator; when phosphorylated it does. Its function is as follows. Glycogen synthase participates in the glycogen biosynthetic process along with glycogenin and glycogen branching enzyme. Extends the primer composed of a few glucose units formed by glycogenin by adding new glucose units to it. In this context, glycogen synthase transfers the glycosyl residue from UDP-Glc to the non-reducing end of alpha-1,4-glucan. The chain is Glycogen [starch] synthase, muscle (GYS1) from Macaca mulatta (Rhesus macaque).